The sequence spans 185 residues: Ribosome-recycling factor (185 aa).

The protein belongs to the RRF family.

The protein localises to the cytoplasm. Its function is as follows. Responsible for the release of ribosomes from messenger RNA at the termination of protein biosynthesis. May increase the efficiency of translation by recycling ribosomes from one round of translation to another. This Pseudomonas aeruginosa (strain LESB58) protein is Ribosome-recycling factor.